The chain runs to 1169 residues: MGRRCCVANCPSTSRLLEHNGVTYHSFPLDPIIRAIWIKNSRISLERQITKSVLVCSRHFRRLDFNTIRNGKYLLKPRVFPTVFPWGKMDTAEIEADQRALQHASVEGTTETPGNAQSSTNDDVIKATVDQIVAQILSESAERKATEEGKTGKAADDVKNTPESGEDANKAAAKEPSGTPVAASSEATVPAPGSASSSNSPLPGTPPKYSNPHNLTIGARLEALSVEGNWLPARIVEVNETEQTLLVRFERNHKLKVSPSTSGSFQEWMAIKSERLRQRLSNRVLPVFELDEKCMARWSGPRKFPGTIRKLLGNDTYEVLFDDGYVKNVRAVHMNKMPKQLPPVQVAEEGASKSPTPVGTPVSSAPVAPKRASTGSLGGSSGSSGSKKSKCAPQRRDWPLLDMASLDIASLGLPEIPHDGEWTCHWVNDQPIGTEGFLIVGEHQKPTVIVQDWRLPPGWIKHMYQRSNVLGKWDVILVSPSGKRFRSKSDLKLFLESQNLVYNPDVYDFSIHRRRAKDINAYVYTHGYNPQPPPKPRPMDVSMNSTLDQSITSQHSLPSTPMPVKESQYMEAPVASLMPPAELMSPQTQPADETKPKIEAEILEASEGGTSQLMLADPHVVENGFAFIGGLKVKIQDNLYVCPREDCAKTYRKEDFLLIHIRHYHKEFAEHVSHCPKMQELAVKRTHPSSIDQVEAVPKNQIPNQQFFAKMHQQDLQQSRSFKRQSVSATATSSTPSDITPTKALLSPKMEPPSVSPTVESGIKQEDVSLDAGPTQSFNPSLSRSCKRARLSPSKRPSGSRKSNRQRSQRRPILSDNPAGHGLTEQDVEETRQSFNTPTPDTRIDSKKRRSGAATTPISSIDSPAMGDSVSTPSSNDQTDINAALAPPPAETLSKAPQYIKENGELIRIVRMRQEEIINCICEYGEEDGLMIQCELCLCWQHGACNGIVKEADVPDKYVCYICRNPQRGRDSMRFKHDQDWLFEGKLPVAAYHTANPQATKQFELLKRSHTLTGNLLDAKRSMHSLLVKINIARNRCHPKLYLWAKKWDEDNLDSTALTPVKRAKLEAPDLPNVPQPEAAIDPEECQYRLIEHIKVQQSLVLDRLNDIEAEMDELEKEDTLDDLKDADISTTKEALATFIKELETMKRLAKLNQVANMKQTLRDSATSK.

The THAP-type zinc finger occupies 5–59 (CCVANCPSTSRLLEHNGVTYHSFPLDPIIRAIWIKNSRISLERQITKSVLVCSRH). Disordered stretches follow at residues 99–122 (RALQ…STND), 140–211 (SAER…KYSN), and 347–394 (AEEG…CAPQ). Over residues 107–122 (EGTTETPGNAQSSTND) the composition is skewed to polar residues. The span at 140-160 (SAERKATEEGKTGKAADDVKN) shows a compositional bias: basic and acidic residues. Positions 190–202 (PAPGSASSSNSPL) are enriched in low complexity. Residues 353–363 (KSPTPVGTPVS) are compositionally biased toward polar residues. One can recognise an MBD domain in the interval 445–514 (KPTVIVQDWR…DVYDFSIHRR (70 aa)). The segment at 527–565 (GYNPQPPPKPRPMDVSMNSTLDQSITSQHSLPSTPMPVK) is disordered. The segment covering 542–559 (SMNSTLDQSITSQHSLPS) has biased composition (polar residues). The C2H2-type zinc-finger motif lies at 640 to 665 (YVCPREDCAKTYRKEDFLLIHIRHYH). The tract at residues 714–890 (QDLQQSRSFK…INAALAPPPA (177 aa)) is disordered. Residues 726–742 (SVSATATSSTPSDITPT) show a composition bias toward low complexity. Residues 774 to 784 (PTQSFNPSLSR) show a composition bias toward polar residues. Over residues 798–810 (SGSRKSNRQRSQR) the composition is skewed to basic residues. Polar residues-rich tracts occupy residues 853–862 (AATTPISSID) and 869–881 (SVST…QTDI).

As to quaternary structure, component of the non-specific lethal (NLS) histone acetyltransferase complex at least composed of mof, nls1, dgt1/NSL2, Rcd1/NSL3, Rcd5/MCRS2, MBD-R2 and wds.

It localises to the nucleus. The protein localises to the chromosome. In terms of biological role, component of the non-specific lethal (NLS) complex, a multiprotein complex that promotes expression of housekeeping genes on X chromosome and autosomes. In Drosophila melanogaster (Fruit fly), this protein is Protein MBD-R2.